The chain runs to 299 residues: Cathepsin B-like CP3 (299 aa).

Residues 1-19 form the signal peptide; sequence MKLFLLAAAAFSAPALTVS. Disulfide bonds link C87/C114, C97/C140, and C133/C176. The active site involves C100. Catalysis depends on residues H244 and N265.

This sequence belongs to the peptidase C1 family.

The protein localises to the vacuole. Thiol protease which is required for parasite excystation and invasion of the proximal small intestine of the human host. This is Cathepsin B-like CP3 (CP3) from Giardia intestinalis (Giardia lamblia).